A 349-amino-acid polypeptide reads, in one-letter code: Methylthioribose-1-phosphate isomerase (349 aa).

Substrate is bound by residues 51 to 53 (RGA), Arg-94, and Gln-199. Asp-240 (proton donor) is an active-site residue. Position 250 to 251 (250 to 251 (NK)) interacts with substrate.

The protein belongs to the EIF-2B alpha/beta/delta subunits family. MtnA subfamily. As to quaternary structure, homodimer.

It catalyses the reaction 5-(methylsulfanyl)-alpha-D-ribose 1-phosphate = 5-(methylsulfanyl)-D-ribulose 1-phosphate. The protein operates within amino-acid biosynthesis; L-methionine biosynthesis via salvage pathway; L-methionine from S-methyl-5-thio-alpha-D-ribose 1-phosphate: step 1/6. Catalyzes the interconversion of methylthioribose-1-phosphate (MTR-1-P) into methylthioribulose-1-phosphate (MTRu-1-P). This chain is Methylthioribose-1-phosphate isomerase, found in Bacillus mycoides (strain KBAB4) (Bacillus weihenstephanensis).